The chain runs to 92 residues: Progonadoliberin-1 (92 aa).

Residues 1–23 (MEKSRKILVGVLLFTASVAICLA) form the signal peptide. Q24 is modified (pyrrolidone carboxylic acid). G33 is modified (glycine amide).

Belongs to the GnRH family.

It is found in the secreted. Functionally, stimulates the secretion of gonadotropins. This chain is Progonadoliberin-1 (GNRH1), found in Gallus gallus (Chicken).